The following is a 1714-amino-acid chain: uncharacterized protein (1714 aa).

Disordered stretches follow at residues 47 to 70 (SVAG…SDDL) and 584 to 616 (KKTG…KSKK). Residues 607 to 614 (ATKESGKS) and 806 to 813 (APTSAGKT) contribute to the ATP site. The segment covering 607 to 616 (ATKESGKSKK) has biased composition (basic and acidic residues). The Helicase ATP-binding domain occupies 793 to 963 (LDSVDRGNSA…WLNSSEQAKS (171 aa)). The DEVH box signature appears at 913–916 (DEVH). The disordered stretch occupies residues 1197-1223 (KRKRDDAEKKKKGDKDEDAGPEKDDDE). Basic and acidic residues predominate over residues 1199–1218 (KRDDAEKKKKGDKDEDAGPE). The 155-residue stretch at 1237–1391 (ALERFKLRGR…NPPFTVLFLL (155 aa)) folds into the Helicase C-terminal domain.

It belongs to the helicase family. SKI2 subfamily.

Its subcellular location is the nucleus. This is an uncharacterized protein from Caenorhabditis elegans.